Reading from the N-terminus, the 402-residue chain is Deoxyguanosinetriphosphate triphosphohydrolase-like protein (402 aa).

The interval 20–39 is disordered; it reads PAFSRGRLVPEPESPTRTPF. The HD domain occupies 73–217; sequence RLTHTIEVAQ…AAIADDIAYN (145 aa).

This sequence belongs to the dGTPase family. Type 2 subfamily.

This is Deoxyguanosinetriphosphate triphosphohydrolase-like protein from Brucella ovis (strain ATCC 25840 / 63/290 / NCTC 10512).